Reading from the N-terminus, the 430-residue chain is Ethylene-responsive transcription factor WRI1 (430 aa).

Residues 1 to 26 (MKKRLTTSTCSSSPSSSVSSSTTTSS) show a composition bias toward low complexity. The segment at 1–66 (MKKRLTTSTC…PASTRRSSIY (66 aa)) is disordered. Positions 53 to 63 (NPTSPASTRRS) are enriched in polar residues. Residues 65 to 131 (IYRGVTRHRW…WGPDTILNFP (67 aa)) constitute a DNA-binding region (AP2/ERF 1). Thr-70 carries the post-translational modification Phosphothreonine; by KIN10. Phosphoserine; by KIN10 is present on Ser-166. The AP2/ERF 2 DNA-binding region spans 167-225 (KYRGVARHHHNGRWEARIGRVFGNKYLYLGTYNTQEEAAAAYDMAAIEYRGANAVTNFD). Residues 260 to 274 (VETREAKEEPREEVK) show a composition bias toward basic and acidic residues. Disordered regions lie at residues 260–297 (VETR…EQQE) and 398–422 (SPPS…TTTT).

The protein belongs to the AP2/ERF transcription factor family. AP2 subfamily. As to quaternary structure, interacts with KIN10 and KIN11. In terms of processing, ubiquitinated. Post-translationally, the phosphorylation at Thr-70 and Ser-166 by KIN10 facilitates its degradation via the proteasomal pathway. As to expression, mostly expressed in siliques, especially in seeds. Also detected in roots and flowers, and, to a lower extent, in leaves stems and seedlings.

It is found in the nucleus. Its activity is regulated as follows. Down-regulated by KIN10 that controls its protein stability under a phosphorylation-dependent manner. Its function is as follows. May be involved in the regulation of gene expression by stress factors and by components of stress signal transduction pathways. Transcriptional activator involved in the activation of a subset of sugar-responsive genes and the control of carbon flow from sucrose import to oil accumulation in developing seeds. Binds to the GCC-box pathogenesis-related promoter element. Promotes sugar uptake and seed oil accumulation by glycolysis. Required for embryo development, seed germination and, indirectly, for seedling establishment. Negative regulator of the ABA-mediated germination inhibition. The protein is Ethylene-responsive transcription factor WRI1 (WRI1) of Arabidopsis thaliana (Mouse-ear cress).